The chain runs to 314 residues: Thymidylate synthase (314 aa).

Residues R21 and 176–177 each bind dUMP; that span reads RR. Residue C196 is the Nucleophile of the active site. DUMP-binding positions include 216–219, N227, and 257–259; these read RSAD and HLY. Residue D219 participates in (6R)-5,10-methylene-5,6,7,8-tetrahydrofolate binding. Residue S313 coordinates (6R)-5,10-methylene-5,6,7,8-tetrahydrofolate.

This sequence belongs to the thymidylate synthase family. Bacterial-type ThyA subfamily. As to quaternary structure, homodimer.

The protein localises to the cytoplasm. The catalysed reaction is dUMP + (6R)-5,10-methylene-5,6,7,8-tetrahydrofolate = 7,8-dihydrofolate + dTMP. It functions in the pathway pyrimidine metabolism; dTTP biosynthesis. In terms of biological role, catalyzes the reductive methylation of 2'-deoxyuridine-5'-monophosphate (dUMP) to 2'-deoxythymidine-5'-monophosphate (dTMP) while utilizing 5,10-methylenetetrahydrofolate (mTHF) as the methyl donor and reductant in the reaction, yielding dihydrofolate (DHF) as a by-product. This enzymatic reaction provides an intracellular de novo source of dTMP, an essential precursor for DNA biosynthesis. The chain is Thymidylate synthase from Listeria innocua serovar 6a (strain ATCC BAA-680 / CLIP 11262).